We begin with the raw amino-acid sequence, 207 residues long: Small ribosomal subunit protein uS4c (207 aa).

The tract at residues Gly-20–Tyr-52 is disordered. A compositionally biased stretch (basic and acidic residues) spans Lys-40–Tyr-52. Positions Met-97–Leu-158 constitute an S4 RNA-binding domain.

Belongs to the universal ribosomal protein uS4 family. Part of the 30S ribosomal subunit. Contacts protein S5. The interaction surface between S4 and S5 is involved in control of translational fidelity.

Its subcellular location is the plastid. In terms of biological role, one of the primary rRNA binding proteins, it binds directly to 16S rRNA where it nucleates assembly of the body of the 30S subunit. Functionally, with S5 and S12 plays an important role in translational accuracy. This is Small ribosomal subunit protein uS4c (rps4) from Prototheca wickerhamii.